Reading from the N-terminus, the 365-residue chain is tRNA/tmRNA (uracil-C(5))-methyltransferase (365 aa).

S-adenosyl-L-methionine-binding residues include Gln189, Tyr217, Asn222, Glu238, and Asp298. Cys323 functions as the Nucleophile in the catalytic mechanism. Glu357 serves as the catalytic Proton acceptor.

Belongs to the class I-like SAM-binding methyltransferase superfamily. RNA M5U methyltransferase family. TrmA subfamily.

The enzyme catalyses uridine(54) in tRNA + S-adenosyl-L-methionine = 5-methyluridine(54) in tRNA + S-adenosyl-L-homocysteine + H(+). The catalysed reaction is uridine(341) in tmRNA + S-adenosyl-L-methionine = 5-methyluridine(341) in tmRNA + S-adenosyl-L-homocysteine + H(+). In terms of biological role, dual-specificity methyltransferase that catalyzes the formation of 5-methyluridine at position 54 (m5U54) in all tRNAs, and that of position 341 (m5U341) in tmRNA (transfer-mRNA). The sequence is that of tRNA/tmRNA (uracil-C(5))-methyltransferase from Saccharophagus degradans (strain 2-40 / ATCC 43961 / DSM 17024).